Reading from the N-terminus, the 32-residue chain is MFDLTGKHVCYVADCGGIALETSXVLMTKNIA.

Y11 to A32 contacts NAD(+).

It belongs to the short-chain dehydrogenases/reductases (SDR) family.

The polypeptide is Alcohol dehydrogenase-related 31 kDa protein (Adhr) (Drosophila yakuba (Fruit fly)).